Reading from the N-terminus, the 128-residue chain is Transcription antitermination protein NusB (128 aa).

The protein belongs to the NusB family.

Functionally, involved in transcription antitermination. Required for transcription of ribosomal RNA (rRNA) genes. Binds specifically to the boxA antiterminator sequence of the ribosomal RNA (rrn) operons. The chain is Transcription antitermination protein NusB from Staphylococcus carnosus (strain TM300).